Here is a 239-residue protein sequence, read N- to C-terminus: Tetraspanin-9 (239 aa).

Residues 1-12 are Cytoplasmic-facing; sequence MARGCLCCVKYM. Residues 13 to 33 form a helical membrane-spanning segment; that stretch reads LFLFNLLFWLGGCGLLGVGVW. At 34–55 the chain is on the extracellular side; it reads LSVSQGSFATLSPSFPSISAAN. The helical transmembrane segment at 56 to 76 threads the bilayer; the sequence is LIITLGAVIMVTGFLGCLGAI. The Cytoplasmic portion of the chain corresponds to 77–85; the sequence is KENKCLLLS. Residues 86-106 traverse the membrane as a helical segment; the sequence is FFITLLVILLAELILLILFFV. The Extracellular portion of the chain corresponds to 107–203; sequence YTDNVSENAR…VEEWLDDNKH (97 aa). Residues Asn110 and Asn180 are each glycosylated (N-linked (GlcNAc...) asparagine). A helical membrane pass occupies residues 204–224; the sequence is LLGTIAMCVLVIQLLGMAFSM. The Cytoplasmic portion of the chain corresponds to 225–239; the sequence is TLYQQIHRSGKKYEA.

The protein belongs to the tetraspanin (TM4SF) family.

It localises to the membrane. The protein is Tetraspanin-9 (tspan9) of Salmo salar (Atlantic salmon).